Consider the following 435-residue polypeptide: Probable exopolygalacturonase B (435 aa).

The first 15 residues, 1–15 (MKFFLATLFASAVSS), serve as a signal peptide directing secretion. Residues N59, N184, and N224 are each glycosylated (N-linked (GlcNAc...) asparagine). PbH1 repeat units lie at residues 208-239 (SKDVSFDDVYIHAFSTNKSALPKNSDGFDSLN), 240-261 (VDGLTVTNTRVDVGDDCFSPKP), 262-283 (NTTNIFVQNLLCNNTHGVSMGS), 294-315 (IEHAYIENVTLLNGQNGARLKA), and 326-347 (INNITYKNIRIENTDAPVVLDQ). The active-site Proton donor is the D254. A disulfide bridge links C256 with C273. N-linked (GlcNAc...) asparagine glycans are attached at residues N262 and N274. The active site involves H277. Residues N301, N328, N365, and N373 are each glycosylated (N-linked (GlcNAc...) asparagine). Residues 366-388 (VTNILFENISGTSSGKNGKVVAD) form a PbH1 6 repeat. A disulfide bridge links C391 with C397. A glycan (N-linked (GlcNAc...) asparagine) is linked at N406.

Belongs to the glycosyl hydrolase 28 family.

It localises to the secreted. The enzyme catalyses [(1-&gt;4)-alpha-D-galacturonosyl](n) + H2O = alpha-D-galacturonate + [(1-&gt;4)-alpha-D-galacturonosyl](n-1). Specific in hydrolyzing the terminal glycosidic bond of polygalacturonic acid and oligogalacturonates. This Aspergillus flavus (strain ATCC 200026 / FGSC A1120 / IAM 13836 / NRRL 3357 / JCM 12722 / SRRC 167) protein is Probable exopolygalacturonase B (pgxB).